A 144-amino-acid chain; its full sequence is Bacilliredoxin BH1716 (144 aa).

This sequence belongs to the bacilliredoxin family.

In Halalkalibacterium halodurans (strain ATCC BAA-125 / DSM 18197 / FERM 7344 / JCM 9153 / C-125) (Bacillus halodurans), this protein is Bacilliredoxin BH1716.